The sequence spans 281 residues: NADPH-dependent 7-cyano-7-deazaguanine reductase (281 aa).

Residue 81–83 participates in substrate binding; that stretch reads IES. An NADPH-binding site is contributed by 83-84; the sequence is SK. The active-site Thioimide intermediate is the C188. Catalysis depends on D195, which acts as the Proton donor. A substrate-binding site is contributed by 227–228; the sequence is HE. 256–257 contributes to the NADPH binding site; sequence RG.

The protein belongs to the GTP cyclohydrolase I family. QueF type 2 subfamily. Homodimer.

It localises to the cytoplasm. The enzyme catalyses 7-aminomethyl-7-carbaguanine + 2 NADP(+) = 7-cyano-7-deazaguanine + 2 NADPH + 3 H(+). The protein operates within tRNA modification; tRNA-queuosine biosynthesis. Catalyzes the NADPH-dependent reduction of 7-cyano-7-deazaguanine (preQ0) to 7-aminomethyl-7-deazaguanine (preQ1). This chain is NADPH-dependent 7-cyano-7-deazaguanine reductase, found in Polaromonas naphthalenivorans (strain CJ2).